Consider the following 175-residue polypeptide: Pancreatic beta cell growth factor (175 aa).

The signal sequence occupies residues 1-26 (MMLPMTLCRMSWMLLSCLMFLSWVEG). A C-type lectin domain is found at 38–175 (ITCPQGSVAY…ELPYICKFKV (138 aa)). 3 cysteine pairs are disulfide-bonded: C40–C51, C68–C171, and C146–C163.

In terms of tissue distribution, expressed only in CW animals pancreas and to a lesser extent in duodenum. In pancreas it is found in acinar cells, but not in islets.

The protein localises to the secreted. Constituent of ilotropin, which is a partially purified preparation of cellophane wrapping (CW) pancreata. Capable of initiating duct cell proliferation, a prerequisite for islet neogenesis. In Mesocricetus auratus (Golden hamster), this protein is Pancreatic beta cell growth factor (INGAP).